Reading from the N-terminus, the 714-residue chain is BRCA1-associated RING domain protein 1 (714 aa).

Residues 25 to 63 form an RING-type zinc finger; that stretch reads CPLCLKLLNRPVLLPCDHVFCDSCVHKSSQVESGCPVCK. 2 disordered regions span residues 106–165 and 254–283; these read YKND…QDWT and KAQNHQQLPKSHTEQDSKRKRDITASDAME. Over residues 118 to 134 the composition is skewed to basic and acidic residues; that stretch reads KHGESEDSEMTDKDVSK. Residues 135–147 are compositionally biased toward low complexity; that stretch reads RSGGTDSSSRDGS. Composition is skewed to basic and acidic residues over residues 155 to 165 and 264 to 283; these read SDPRPKHQDWT and SHTEQDSKRKRDITASDAME. Residues 331–382 form a C2HC pre-PHD-type zinc finger; the sequence is ITICGFCQSARVSEATGEMLHYSRGRPVDGDDIFRSNVIHVHSACIEWAPQV. A PHD-type zinc finger spans residues 402–451; sequence IKCTKCSLKGAALGCFVKSCRRSYHVPCAREISRCRWDYEDFLLLCPAHS. 2 BRCT domains span residues 482–577 and 598–713; these read EQTP…PFEI and NKPK…HPVI.

As to quaternary structure, component of a DNA-protein complex on WUS and WOX5 promoters. Interacts with SYD. Forms heterodimer with BRCA1. Expressed in the shoot apical meristem (SAM), roots, flowers, embryos and seedlings. Mostly expressed in flowers and siliques, and, to a lower extent, in roots, rosette leaves, inflorescence and young cauline leaves.

The protein localises to the nucleus. Binds specifically to H3K4me3 regions of target genes (e.g. WUS and WOX5) promoters to repress their transcription via chromatin remodeling. Required for the shoot apical meristem (SAM) organization and maintenance, by confining WUS expression to the organizing center, and for the quiescent center (QC) development in the root apical meristem (RAM), by repressing WOX5 expression in the root proximal meristem. Plays a role in DNA repair and in cell-cycle control. Required for the repair of DNA double-strand breaks (DSBs), both natural and induced by genotoxic stress, by homologous recombination (HR). In Arabidopsis thaliana (Mouse-ear cress), this protein is BRCA1-associated RING domain protein 1.